A 394-amino-acid polypeptide reads, in one-letter code: Protein TsgA homolog (394 aa).

Transmembrane regions (helical) follow at residues 11 to 31 (WISF…GMVL), 51 to 71 (FLNA…EIVP), 76 to 96 (LIFG…SHSL), 101 to 121 (LCMF…TFLI), 135 to 155 (LFTD…AAAI), 163 to 183 (YWVY…ALCF), 205 to 225 (LGVA…LGFI), 245 to 265 (SVVG…SAIL), 273 to 293 (IVTA…NTTD), 299 to 319 (WIIM…ITLG), 333 to 353 (FILT…GPIV), and 362 to 382 (LATT…LGFV).

The protein belongs to the major facilitator superfamily. TsgA family.

The protein localises to the cell inner membrane. This chain is Protein TsgA homolog, found in Erwinia tasmaniensis (strain DSM 17950 / CFBP 7177 / CIP 109463 / NCPPB 4357 / Et1/99).